Consider the following 193-residue polypeptide: MYQDLIRSELNEAADTLAKFLSDDANIEAIQKAAVLLADSFKVGGKVLSCGNGGSHCDAMHFAEELTGRYRENRPGYPAIAISDVSHLSCVSNDFGYEFVFSRYIEAVGKEGDVLLGISTSGNSGNIIKAVEAARLKGMKVITLTGKDGGKMAGTADVEIRVPHFGYADRIQEIHIKVIHILIQLIEKEMVKA.

Positions 37 to 193 (LADSFKVGGK…QLIEKEMVKA (157 aa)) constitute an SIS domain. Residue 52 to 54 (NGG) coordinates substrate. Zn(2+)-binding residues include His61 and Glu65. Substrate is bound by residues Glu65, 93-94 (ND), 119-121 (STS), Ser124, and Gln172. Residues Gln172 and His180 each coordinate Zn(2+).

The protein belongs to the SIS family. GmhA subfamily. Homotetramer. The cofactor is Zn(2+).

Its subcellular location is the cytoplasm. It carries out the reaction 2 D-sedoheptulose 7-phosphate = D-glycero-alpha-D-manno-heptose 7-phosphate + D-glycero-beta-D-manno-heptose 7-phosphate. The protein operates within carbohydrate biosynthesis; D-glycero-D-manno-heptose 7-phosphate biosynthesis; D-glycero-alpha-D-manno-heptose 7-phosphate and D-glycero-beta-D-manno-heptose 7-phosphate from sedoheptulose 7-phosphate: step 1/1. It functions in the pathway bacterial outer membrane biogenesis; LPS core biosynthesis. Functionally, catalyzes the isomerization of sedoheptulose 7-phosphate in D-glycero-D-manno-heptose 7-phosphate. This Photorhabdus laumondii subsp. laumondii (strain DSM 15139 / CIP 105565 / TT01) (Photorhabdus luminescens subsp. laumondii) protein is Phosphoheptose isomerase.